A 490-amino-acid chain; its full sequence is Protein nucleotidyltransferase YdiU (490 aa).

Gly-89, Gly-91, Arg-92, Lys-112, Asp-124, Gly-125, Arg-175, and Arg-182 together coordinate ATP. Asp-251 acts as the Proton acceptor in catalysis. Mg(2+) is bound by residues Asn-252 and Asp-261. Asp-261 serves as a coordination point for ATP.

It belongs to the SELO family. Mg(2+) is required as a cofactor. Requires Mn(2+) as cofactor.

It catalyses the reaction L-seryl-[protein] + ATP = 3-O-(5'-adenylyl)-L-seryl-[protein] + diphosphate. The enzyme catalyses L-threonyl-[protein] + ATP = 3-O-(5'-adenylyl)-L-threonyl-[protein] + diphosphate. The catalysed reaction is L-tyrosyl-[protein] + ATP = O-(5'-adenylyl)-L-tyrosyl-[protein] + diphosphate. It carries out the reaction L-histidyl-[protein] + UTP = N(tele)-(5'-uridylyl)-L-histidyl-[protein] + diphosphate. It catalyses the reaction L-seryl-[protein] + UTP = O-(5'-uridylyl)-L-seryl-[protein] + diphosphate. The enzyme catalyses L-tyrosyl-[protein] + UTP = O-(5'-uridylyl)-L-tyrosyl-[protein] + diphosphate. Its function is as follows. Nucleotidyltransferase involved in the post-translational modification of proteins. It can catalyze the addition of adenosine monophosphate (AMP) or uridine monophosphate (UMP) to a protein, resulting in modifications known as AMPylation and UMPylation. The sequence is that of Protein nucleotidyltransferase YdiU from Vibrio vulnificus (strain CMCP6).